Consider the following 296-residue polypeptide: Thioredoxin-related transmembrane protein 2 (296 aa).

A signal peptide spans 1–48 (MAVLAPLIALVYSVPRLSRWLARPYYFLSALLSAAFLLVRKLPPVCES). Over 49–102 (LPTQREDGNPCDFDWREVEILMFLSAIVMMKNRRSITVEQHVGNIFMFSKVANA) the chain is Extracellular. Residues 103-125 (ILFFRLDIRMGLLYITLCIVFLM) traverse the membrane as a helical segment. The Cytoplasmic portion of the chain corresponds to 126-296 (TCKPPLYMGP…VPDEESKKDK (171 aa)). Positions 132-269 (YMGPEYIKYF…LYQRAKKLSK (138 aa)) constitute a Thioredoxin domain. A phosphoserine mark is found at Ser211 and Ser243. The interval 272–296 (DKIPEEQPVAAVPAAVPDEESKKDK) is disordered. The span at 277–287 (EQPVAAVPAAV) shows a compositional bias: low complexity. The short motif at 293 to 296 (KKDK) is the Di-lysine motif element.

As to quaternary structure, monomer. Homodimer; disulfide-linked. Occurs in both reduced and oxidized monomeric form. Oxidative conditions increase homodimerization. Interacts with CANX. Interacts with ATP2A2.

It localises to the endoplasmic reticulum membrane. The protein localises to the mitochondrion membrane. Functionally, endoplasmic reticulum and mitochondria-associated protein that probably functions as a regulator of cellular redox state and thereby regulates protein post-translational modification, protein folding and mitochondrial activity. Indirectly regulates neuronal proliferation, migration, and organization in the developing brain. The protein is Thioredoxin-related transmembrane protein 2 (TMX2) of Bos taurus (Bovine).